The chain runs to 146 residues: Small ribosomal subunit protein uS13A (146 aa).

An N-acetylserine modification is found at S2. A Glycyl lysine isopeptide (Lys-Gly) (interchain with G-Cter in ubiquitin) cross-link involves residue K36. An N6-methyllysine; by RKM1 modification is found at K48. Glycyl lysine isopeptide (Lys-Gly) (interchain with G-Cter in ubiquitin) cross-links involve residues K49, K80, and K96.

This sequence belongs to the universal ribosomal protein uS13 family. Component of the small ribosomal subunit (SSU). Mature yeast ribosomes consist of a small (40S) and a large (60S) subunit. The 40S small subunit contains 1 molecule of ribosomal RNA (18S rRNA) and 33 different proteins (encoded by 57 genes). The large 60S subunit contains 3 rRNA molecules (25S, 5.8S and 5S rRNA) and 46 different proteins (encoded by 81 genes). Post-translationally, N-terminally acetylated by acetyltransferase NatA.

The protein localises to the cytoplasm. In terms of biological role, component of the ribosome, a large ribonucleoprotein complex responsible for the synthesis of proteins in the cell. The small ribosomal subunit (SSU) binds messenger RNAs (mRNAs) and translates the encoded message by selecting cognate aminoacyl-transfer RNA (tRNA) molecules. The large subunit (LSU) contains the ribosomal catalytic site termed the peptidyl transferase center (PTC), which catalyzes the formation of peptide bonds, thereby polymerizing the amino acids delivered by tRNAs into a polypeptide chain. The nascent polypeptides leave the ribosome through a tunnel in the LSU and interact with protein factors that function in enzymatic processing, targeting, and the membrane insertion of nascent chains at the exit of the ribosomal tunnel. The sequence is that of Small ribosomal subunit protein uS13A from Saccharomyces cerevisiae (strain ATCC 204508 / S288c) (Baker's yeast).